Here is a 159-residue protein sequence, read N- to C-terminus: Large ribosomal subunit protein uL15 (159 aa).

A compositionally biased stretch (basic and acidic residues) spans 1-13; the sequence is MRIHEVTPKEGST. Residues 1 to 51 form a disordered region; sequence MRIHEVTPKEGSTKRRRRVGRGISAGQGASCGFGMRGQKSRSGTGTKAGFE. The span at 23 to 35 shows a compositional bias: gly residues; the sequence is ISAGQGASCGFGM.

This sequence belongs to the universal ribosomal protein uL15 family. As to quaternary structure, part of the 50S ribosomal subunit.

Functionally, binds to the 23S rRNA. This is Large ribosomal subunit protein uL15 from Rippkaea orientalis (strain PCC 8801 / RF-1) (Cyanothece sp. (strain PCC 8801)).